The sequence spans 814 residues: Plakophilin-2 (814 aa).

The interval 1–329 is required for binding to single-stranded DNA; it reads MAIPGSLGEC…MTLERAVNML (329 aa). Phosphoserine is present on Ser44. Arg46 carries the omega-N-methylarginine modification. Phosphoserine occurs at positions 82 and 130. ARM repeat units lie at residues 200–240, 309–352, 354–393, 503–549, 604–644, 652–691, 696–737, and 740–782; these read TCQH…SIKG, CDCL…ESFQ, SEAR…NLVF, PDGR…NLSY, PRGI…NLTA, SVAR…NLSR, QNEI…NLMQ, and YQNA…SLWA.

This sequence belongs to the beta-catenin family. As to quaternary structure, interacts with DSC2. Interacts with JUP. Interacts with KRT5/CK5, KRT8/CK8, KRT14/CK14, KRT18/CK18 and VIM. Interacts (via N-terminus) with MARK3/C-TAK1. Interacts with DSP. Interacts with DSG1, DSG2 and DSG3. Interacts (via N-terminus) with CTNNB1. Interacts with CDH1. Interacts with the RNA polymerase III (Pol III) complex proteins POLR3A/RPC155, POLR3F/RPC39 and POLR3C/RPC82. Interacts with CTNNA3. Interacts (via N-terminus) with SCN5A/Nav1.5. Interacts with ANK3/ANKG and GJA1/CX43. In terms of tissue distribution, expressed in the heart (at protein level).

The protein localises to the nucleus. Its subcellular location is the cell junction. It localises to the desmosome. The protein resides in the cytoplasm. Its function is as follows. A component of desmosome cell-cell junctions which are required for positive regulation of cellular adhesion. Regulates focal adhesion turnover resulting in changes in focal adhesion size, cell adhesion and cell spreading, potentially via transcriptional modulation of beta-integrins. Required to maintain gingival epithelial barrier function. Important component of the desmosome that is also required for localization of desmosome component proteins such as DSC2, DSG2 and JUP to the desmosome cell-cell junction. Required for the formation of desmosome cell junctions in cardiomyocytes, thereby required for the correct formation of the heart, specifically trabeculation and formation of the atria walls. Loss of desmosome cell junctions leads to mis-localization of DSP and DSG2 resulting in disruption of cell-cell adhesion and disordered intermediate filaments. Modulates profibrotic gene expression in cardiomyocytes via regulation of DSP expression and subsequent activation of downstream TGFB1 and MAPK14/p38 MAPK signaling. Required for cardiac sodium current propagation and electrical synchrony in cardiac myocytes, via ANK3 stabilization and modulation of SCN5A/Nav1.5 localization to cell-cell junctions. Required for mitochondrial function, nuclear envelope integrity and positive regulation of SIRT3 transcription via maintaining DES localization at its nuclear envelope and cell tip anchoring points, and thereby preserving regulation of the transcriptional program. Maintenance of nuclear envelope integrity protects against DNA damage and transcriptional dysregulation of genes, especially those involved in the electron transport chain, thereby preserving mitochondrial function and protecting against superoxide radical anion generation. Binds single-stranded DNA (ssDNA). May regulate the localization of GJA1 to gap junctions in intercalated disks of the heart. In Rattus norvegicus (Rat), this protein is Plakophilin-2.